We begin with the raw amino-acid sequence, 274 residues long: Glutamate racemase (274 aa).

Residues 9–10 and 41–42 contribute to the substrate site; these read DS and YG. The active-site Proton donor/acceptor is Cys-73. 74 to 75 provides a ligand contact to substrate; sequence NT. Cys-183 (proton donor/acceptor) is an active-site residue. 184–185 serves as a coordination point for substrate; the sequence is TH.

The protein belongs to the aspartate/glutamate racemases family.

It carries out the reaction L-glutamate = D-glutamate. It participates in cell wall biogenesis; peptidoglycan biosynthesis. In terms of biological role, provides the (R)-glutamate required for cell wall biosynthesis. The chain is Glutamate racemase from Shewanella baltica (strain OS195).